Reading from the N-terminus, the 175-residue chain is NADH dehydrogenase [ubiquinone] iron-sulfur protein 4, mitochondrial (175 aa).

The N-terminal 42 residues, 1–42, are a transit peptide targeting the mitochondrion; sequence MAAVSMSVALRQALWGRRVATVAAVSVSKVSTRSLSTSTWRL. Residues 149 to 175 are disordered; that stretch reads ERKVPKPKSKSYGANFSWNKRTRVSTK. At Ser-173 the chain carries Phosphoserine.

The protein belongs to the complex I NDUFS4 subunit family. Mammalian complex I is composed of 45 different subunits. This is a component of the iron-sulfur (IP) fragment of the enzyme. Interacts with BCAP31 and TOMM40; the interaction mediates its translocation to the mitochondria; the interaction with BCAP31 is direct. In terms of processing, phosphorylated.

The protein resides in the mitochondrion inner membrane. Its function is as follows. Accessory subunit of the mitochondrial membrane respiratory chain NADH dehydrogenase (Complex I), that is believed not to be involved in catalysis. Complex I functions in the transfer of electrons from NADH to the respiratory chain. The immediate electron acceptor for the enzyme is believed to be ubiquinone. This Bos taurus (Bovine) protein is NADH dehydrogenase [ubiquinone] iron-sulfur protein 4, mitochondrial (NDUFS4).